Here is a 198-residue protein sequence, read N- to C-terminus: Putative undecaprenyl-diphosphatase YbjG (198 aa).

The Cytoplasmic portion of the chain corresponds to 1 to 27; that stretch reads MLENLNLSLFSLINATPDSAPWMISLA. A helical membrane pass occupies residues 28–48; that stretch reads IFIAKDLITVVPLLAVVLWLW. The Periplasmic segment spans residues 49 to 57; it reads GLTAQRQLV. A helical transmembrane segment spans residues 58–78; it reads IKIAIALAVSLFVSWTMGHLF. Topologically, residues 79–120 are cytoplasmic; it reads PHDRPFVENIGYNFLHHAADDSFPSDHGTVIFTFALAFLCWH. The helical transmembrane segment at 121-143 threads the bilayer; the sequence is RLWSGSLLMVLAVVIAWSRVYLG. Residues 144–149 lie on the Periplasmic side of the membrane; that stretch reads VHWPLD. A helical transmembrane segment spans residues 150 to 172; sequence MLGGLLAGMIGCLSAQIIWQAMG. At 173-198 the chain is on the cytoplasmic side; that stretch reads HKLYQRLQSWYRVCFALPIRKGWVRD.

Belongs to the BcrC/YbjG family.

The protein localises to the cell inner membrane. The catalysed reaction is di-trans,octa-cis-undecaprenyl diphosphate + H2O = di-trans,octa-cis-undecaprenyl phosphate + phosphate + H(+). Overexpression leads to increased undecaprenyl diphosphatase activity and to increased resistance to bacitracin. May have a preferred substrate other than undecaprenyl diphosphate in vivo. The sequence is that of Putative undecaprenyl-diphosphatase YbjG (ybjG) from Escherichia coli (strain K12).